A 293-amino-acid polypeptide reads, in one-letter code: Probable porphobilinogen deaminase (293 aa).

C233 is subject to S-(dipyrrolylmethanemethyl)cysteine.

Belongs to the HMBS family. Dipyrromethane is required as a cofactor.

It carries out the reaction 4 porphobilinogen + H2O = hydroxymethylbilane + 4 NH4(+). It participates in porphyrin-containing compound metabolism; protoporphyrin-IX biosynthesis; coproporphyrinogen-III from 5-aminolevulinate: step 2/4. Functionally, tetrapolymerization of the monopyrrole PBG into the hydroxymethylbilane pre-uroporphyrinogen in several discrete steps. The chain is Probable porphobilinogen deaminase from Saccharolobus islandicus (strain L.S.2.15 / Lassen #1) (Sulfolobus islandicus).